The sequence spans 69 residues: Putative membrane protein insertion efficiency factor (69 aa).

The protein belongs to the UPF0161 family.

It localises to the cell inner membrane. Its function is as follows. Could be involved in insertion of integral membrane proteins into the membrane. The sequence is that of Putative membrane protein insertion efficiency factor from Novosphingobium aromaticivorans (strain ATCC 700278 / DSM 12444 / CCUG 56034 / CIP 105152 / NBRC 16084 / F199).